The chain runs to 561 residues: Long-chain-fatty-acid--CoA ligase (561 aa).

An ATP-binding site is contributed by 213–224 (YTGGTTGVAKGA).

Belongs to the ATP-dependent AMP-binding enzyme family. Mg(2+) is required as a cofactor.

The protein resides in the membrane. It catalyses the reaction a long-chain fatty acid + ATP + CoA = a long-chain fatty acyl-CoA + AMP + diphosphate. It participates in lipid metabolism; fatty acid beta-oxidation. Its function is as follows. Catalyzes the esterification, concomitant with transport, of exogenous long-chain fatty acids into metabolically active CoA thioesters for subsequent degradation or incorporation into phospholipids. This Salmonella typhi protein is Long-chain-fatty-acid--CoA ligase (fadD).